A 261-amino-acid polypeptide reads, in one-letter code: Cytochrome c oxidase subunit 3 (261 aa).

Over 1-15 (MTHQTHAYHMVNPSP) the chain is Mitochondrial matrix. A helical transmembrane segment spans residues 16-34 (WPLTGALSALLMTSGLIMW). Over 35 to 40 (FHFNST) the chain is Mitochondrial intermembrane. A helical membrane pass occupies residues 41–66 (ALLMLGLTTNMLTMYQWWRDIIREST). The Mitochondrial matrix portion of the chain corresponds to 67–72 (FQGHHT). A helical transmembrane segment spans residues 73–105 (PVVQKGLRYGMILFIISEVLFFTGFFWAFYHSS). At 106–128 (LAPTPELGGCWPPTGINPLNPLE) the chain is on the mitochondrial intermembrane side. The chain crosses the membrane as a helical span at residues 129–152 (VPLLNTSVLLASGVSITWAHHSLM). Residues 153–155 (EGN) lie on the Mitochondrial matrix side of the membrane. A helical transmembrane segment spans residues 156-183 (RSHMLQALFITITLGVYFTLLQASEYYE). The Mitochondrial intermembrane portion of the chain corresponds to 184–190 (APFTISD). The helical transmembrane segment at 191–223 (GVYGSTFFVATGFHGLHVIIGSTFLIVCFFRQL) threads the bilayer. Topologically, residues 224 to 232 (KFHFTSNHH) are mitochondrial matrix. A helical membrane pass occupies residues 233 to 256 (FGFEAAAWYWHFVDVVWLFLYVSI). Residues 257–261 (YWWGS) are Mitochondrial intermembrane-facing.

Belongs to the cytochrome c oxidase subunit 3 family. Component of the cytochrome c oxidase (complex IV, CIV), a multisubunit enzyme composed of 14 subunits. The complex is composed of a catalytic core of 3 subunits MT-CO1, MT-CO2 and MT-CO3, encoded in the mitochondrial DNA, and 11 supernumerary subunits COX4I, COX5A, COX5B, COX6A, COX6B, COX6C, COX7A, COX7B, COX7C, COX8 and NDUFA4, which are encoded in the nuclear genome. The complex exists as a monomer or a dimer and forms supercomplexes (SCs) in the inner mitochondrial membrane with NADH-ubiquinone oxidoreductase (complex I, CI) and ubiquinol-cytochrome c oxidoreductase (cytochrome b-c1 complex, complex III, CIII), resulting in different assemblies (supercomplex SCI(1)III(2)IV(1) and megacomplex MCI(2)III(2)IV(2)).

The protein resides in the mitochondrion inner membrane. It carries out the reaction 4 Fe(II)-[cytochrome c] + O2 + 8 H(+)(in) = 4 Fe(III)-[cytochrome c] + 2 H2O + 4 H(+)(out). Its function is as follows. Component of the cytochrome c oxidase, the last enzyme in the mitochondrial electron transport chain which drives oxidative phosphorylation. The respiratory chain contains 3 multisubunit complexes succinate dehydrogenase (complex II, CII), ubiquinol-cytochrome c oxidoreductase (cytochrome b-c1 complex, complex III, CIII) and cytochrome c oxidase (complex IV, CIV), that cooperate to transfer electrons derived from NADH and succinate to molecular oxygen, creating an electrochemical gradient over the inner membrane that drives transmembrane transport and the ATP synthase. Cytochrome c oxidase is the component of the respiratory chain that catalyzes the reduction of oxygen to water. Electrons originating from reduced cytochrome c in the intermembrane space (IMS) are transferred via the dinuclear copper A center (CU(A)) of subunit 2 and heme A of subunit 1 to the active site in subunit 1, a binuclear center (BNC) formed by heme A3 and copper B (CU(B)). The BNC reduces molecular oxygen to 2 water molecules using 4 electrons from cytochrome c in the IMS and 4 protons from the mitochondrial matrix. The polypeptide is Cytochrome c oxidase subunit 3 (MT-CO3) (Syncerus caffer (African buffalo)).